The chain runs to 151 residues: Macrodomain Ter protein (151 aa).

The protein belongs to the MatP family. In terms of assembly, homodimer.

The protein localises to the cytoplasm. Its function is as follows. Required for spatial organization of the terminus region of the chromosome (Ter macrodomain) during the cell cycle. Prevents early segregation of duplicated Ter macrodomains during cell division. Binds specifically to matS, which is a 13 bp signature motif repeated within the Ter macrodomain. This is Macrodomain Ter protein from Escherichia fergusonii (strain ATCC 35469 / DSM 13698 / CCUG 18766 / IAM 14443 / JCM 21226 / LMG 7866 / NBRC 102419 / NCTC 12128 / CDC 0568-73).